The following is a 126-amino-acid chain: C-X-C motif chemokine 9 (126 aa).

Positions 1-21 (MKSAVLFLLGIIFLEQCGVRG) are cleaved as a signal peptide. Intrachain disulfides connect cysteine 30–cysteine 57 and cysteine 32–cysteine 73. Asparagine 58 is a glycosylation site (N-linked (GlcNAc...) asparagine). The interval 91–126 (KISQKKKQKRGKKHQKNMKNRKPKTPQSRRRSRKTT) is disordered. The segment covering 93-126 (SQKKKQKRGKKHQKNMKNRKPKTPQSRRRSRKTT) has biased composition (basic residues).

Belongs to the intercrine alpha (chemokine CxC) family.

The protein resides in the secreted. In terms of biological role, may be a cytokine that affects the growth, movement, or activation state of cells that participate in immune and inflammatory response. In Mus musculus (Mouse), this protein is C-X-C motif chemokine 9 (Cxcl9).